A 198-amino-acid polypeptide reads, in one-letter code: MEAFHTHTGIGVPLRRSNVDTDQIIPAVYLKRVTRTGFEDGLFASWRSDPSFVLNLSPFDRGSVLVAGPDFGTGSSREHAVWALMDYGFRVVISSRFGDIFRGNAGKAGLLAAEVSQDGVELLWKLIEQSPGLEITANLQDRNITAGTTVLPFKIDDHTAWRLLEGLDDIALTLRKLDRIESYEATYPDWKPRTSPVA.

The protein belongs to the LeuD family. LeuD type 1 subfamily. As to quaternary structure, heterodimer of LeuC and LeuD.

It carries out the reaction (2R,3S)-3-isopropylmalate = (2S)-2-isopropylmalate. It participates in amino-acid biosynthesis; L-leucine biosynthesis; L-leucine from 3-methyl-2-oxobutanoate: step 2/4. In terms of biological role, catalyzes the isomerization between 2-isopropylmalate and 3-isopropylmalate, via the formation of 2-isopropylmaleate. This chain is 3-isopropylmalate dehydratase small subunit, found in Mycolicibacterium paratuberculosis (strain ATCC BAA-968 / K-10) (Mycobacterium paratuberculosis).